We begin with the raw amino-acid sequence, 86 residues long: Photosystem I reaction center subunit PsaK (86 aa).

The next 2 membrane-spanning stretches (helical) occupy residues 14–34 (LQWS…AIAF) and 57–77 (FGLP…VGAV).

Belongs to the PsaG/PsaK family.

It localises to the cellular thylakoid membrane. The chain is Photosystem I reaction center subunit PsaK from Nostoc punctiforme (strain ATCC 29133 / PCC 73102).